Here is a 154-residue protein sequence, read N- to C-terminus: Myoglobin (154 aa).

The Globin domain maps to 2 to 148 (GLSDGEWQLV…FRKDIAAKYK (147 aa)). S4 carries the phosphoserine modification. Residue H65 participates in nitrite binding. H65 contacts O2. T68 carries the phosphothreonine modification. H94 is a heme b binding site.

It belongs to the globin family. Monomeric.

The protein localises to the cytoplasm. It localises to the sarcoplasm. It carries out the reaction Fe(III)-heme b-[protein] + nitric oxide + H2O = Fe(II)-heme b-[protein] + nitrite + 2 H(+). The catalysed reaction is H2O2 + AH2 = A + 2 H2O. In terms of biological role, monomeric heme protein which primary function is to store oxygen and facilitate its diffusion within muscle tissues. Reversibly binds oxygen through a pentacoordinated heme iron and enables its timely and efficient release as needed during periods of heightened demand. Depending on the oxidative conditions of tissues and cells, and in addition to its ability to bind oxygen, it also has a nitrite reductase activity whereby it regulates the production of bioactive nitric oxide. Under stress conditions, like hypoxia and anoxia, it also protects cells against reactive oxygen species thanks to its pseudoperoxidase activity. The protein is Myoglobin (MB) of Delphinus delphis (Short-beaked common dolphin).